A 164-amino-acid chain; its full sequence is Protein SprT (164 aa).

The SprT-like domain maps to 13–156 (YQQAEAFFKR…LCRRCREPLV (144 aa)). Histidine 69 provides a ligand contact to Zn(2+). Glutamate 70 is a catalytic residue. Residue histidine 73 coordinates Zn(2+).

This sequence belongs to the SprT family. Zn(2+) serves as cofactor.

It localises to the cytoplasm. In Pseudomonas syringae pv. syringae (strain B728a), this protein is Protein SprT.